The primary structure comprises 240 residues: DNA repair protein RecO (240 aa).

It belongs to the RecO family.

Involved in DNA repair and RecF pathway recombination. The protein is DNA repair protein RecO of Wolbachia pipientis wMel.